Here is a 434-residue protein sequence, read N- to C-terminus: Protein TolB homolog (434 aa).

Positions 1-27 are cleaved as a signal peptide; sequence MRSTRNSFACLCIMLFGMLFVPFTLRA. The tract at residues 413 to 434 is disordered; that stretch reads SNQRPLLNMQGEQQQPSWSVSK.

This sequence belongs to the TolB family.

Its subcellular location is the periplasm. This chain is Protein TolB homolog, found in Chlorobaculum tepidum (strain ATCC 49652 / DSM 12025 / NBRC 103806 / TLS) (Chlorobium tepidum).